A 340-amino-acid polypeptide reads, in one-letter code: S-adenosylmethionine:tRNA ribosyltransferase-isomerase (340 aa).

It belongs to the QueA family. Monomer.

The protein localises to the cytoplasm. The enzyme catalyses 7-aminomethyl-7-carbaguanosine(34) in tRNA + S-adenosyl-L-methionine = epoxyqueuosine(34) in tRNA + adenine + L-methionine + 2 H(+). Its pathway is tRNA modification; tRNA-queuosine biosynthesis. Functionally, transfers and isomerizes the ribose moiety from AdoMet to the 7-aminomethyl group of 7-deazaguanine (preQ1-tRNA) to give epoxyqueuosine (oQ-tRNA). The sequence is that of S-adenosylmethionine:tRNA ribosyltransferase-isomerase from Campylobacter concisus (strain 13826).